The primary structure comprises 547 residues: Chaperonin GroEL 1 (547 aa).

ATP-binding positions include 30–33 (TLGP), Lys51, 87–91 (DGTTT), Gly415, and Asp496.

It belongs to the chaperonin (HSP60) family. In terms of assembly, forms a cylinder of 14 subunits composed of two heptameric rings stacked back-to-back. Interacts with the co-chaperonin GroES.

The protein localises to the cytoplasm. It catalyses the reaction ATP + H2O + a folded polypeptide = ADP + phosphate + an unfolded polypeptide.. Together with its co-chaperonin GroES, plays an essential role in assisting protein folding. The GroEL-GroES system forms a nano-cage that allows encapsulation of the non-native substrate proteins and provides a physical environment optimized to promote and accelerate protein folding. This Rhodopseudomonas palustris (strain ATCC BAA-98 / CGA009) protein is Chaperonin GroEL 1.